Here is a 714-residue protein sequence, read N- to C-terminus: ATP-dependent zinc metalloprotease FtsH (714 aa).

Over methionine 1–glutamine 75 the chain is Cytoplasmic. A helical transmembrane segment spans residues phenylalanine 76 to valine 96. At serine 97–leucine 188 the chain is on the periplasmic side. Residues serine 189 to isoleucine 209 form a helical membrane-spanning segment. The Cytoplasmic portion of the chain corresponds to lysine 210–threonine 714. Glycine 280 to threonine 287 lines the ATP pocket. Position 502 (histidine 502) interacts with Zn(2+). The active site involves glutamate 503. Residues histidine 506 and aspartate 579 each coordinate Zn(2+). The tract at residues proline 688–threonine 714 is disordered. Positions glutamate 699–threonine 714 are enriched in polar residues.

It in the central section; belongs to the AAA ATPase family. In the C-terminal section; belongs to the peptidase M41 family. As to quaternary structure, homohexamer. Requires Zn(2+) as cofactor.

It localises to the cell inner membrane. In terms of biological role, acts as a processive, ATP-dependent zinc metallopeptidase for both cytoplasmic and membrane proteins. Plays a role in the quality control of integral membrane proteins. The polypeptide is ATP-dependent zinc metalloprotease FtsH (Ralstonia pickettii (strain 12J)).